The primary structure comprises 150 residues: Ribonuclease K6 (150 aa).

The signal sequence occupies residues 1–23; it reads MVLCFPLLLLLLVLWGPVCLLHA. His38 acts as the Proton acceptor in catalysis. 4 disulfide bridges follow: Cys46-Cys104, Cys60-Cys114, Cys78-Cys129, and Cys85-Cys92. N-linked (GlcNAc...) asparagine glycosylation occurs at Asn55. Residues 61–65 and Lys86 each bind substrate; that span reads KHQNT. Asn100 is a glycosylation site (N-linked (GlcNAc...) asparagine). Arg105 is a substrate binding site. Catalysis depends on His145, which acts as the Proton donor.

It belongs to the pancreatic ribonuclease family. As to quaternary structure, interacts (via N-terminus) with bacterial lipopolysaccharide (LPS).

It is found in the secreted. It localises to the lysosome. Its subcellular location is the cytoplasmic granule. In terms of biological role, ribonuclease which shows a preference for the pyrimidines uridine and cytosine. Has potent antibacterial activity against a range of Gram-positive and Gram-negative bacteria, including P.aeruginosa, A.baumanii, M.luteus, S.aureus, E.faecalis, E.faecium, S.saprophyticus and E.coli. Causes loss of bacterial membrane integrity, and also promotes agglutination of Gram-negative bacteria. Probably contributes to urinary tract sterility. Bactericidal activity is independent of RNase activity. In Miopithecus talapoin (Angolan talapoin), this protein is Ribonuclease K6 (RNASE6).